The chain runs to 475 residues: Ubiquitin carboxyl-terminal hydrolase calypso (475 aa).

The region spanning 44–275 (GWLELESDPG…IRFNLMAVVP (232 aa)) is the UCH catalytic domain. The active-site Nucleophile is cysteine 130. The Proton donor role is filled by histidine 212. Residues 333-360 (AKDLQLLLKNLDTEIAINEQNLADENDR) adopt a coiled-coil conformation. Positions 374–402 (NYDKFICTFLSMLAHQGVLGELVSQHLLP) constitute a ULD domain. The positively charged C-terminal tail required for binding nucleosomes stretch occupies residues 404-475 (KKVSGQSAAN…KGRNKCRKRK (72 aa)). A disordered region spans residues 411–475 (AANRISKQNS…KGRNKCRKRK (65 aa)). Positions 419 to 460 (NSAASSAGANAGAAAGVTPKSQQQQQQPQTAASKNGKSPGKT) are enriched in low complexity. The span at 461–475 (PGRRRKGRNKCRKRK) shows a compositional bias: basic residues.

It belongs to the peptidase C12 family. BAP1 subfamily. Catalytic component of the polycomb repressive deubiquitinase (PR-DUB) complex, at least composed of caly/calypso, Asx and sba (MBD5/6 homolog). The PR-DUB complex associates with nucleosomes to mediate deubiquitination of histone H2AK118ub1 substrates; the association requires the positively charged C-terminal tail of caly, probably due to direct binding of DNA. Interacts (via ULD domain) with Asx (via DEUBAD domain); the interaction produces a stable heterodimer with a composite binding site for ubiquitin. Homodimerizes (via coiled-coil hinge-region between the UCH and ULD domains) to mediate assembly of 2 copies of the caly-Asx heterodimer into a bisymmetric tetramer; dimerization enhances PR-DUB association with nucleosomes.

It localises to the nucleus. It carries out the reaction Thiol-dependent hydrolysis of ester, thioester, amide, peptide and isopeptide bonds formed by the C-terminal Gly of ubiquitin (a 76-residue protein attached to proteins as an intracellular targeting signal).. Its function is as follows. Catalytic component of the polycomb repressive deubiquitinase (PR-DUB) complex, a complex that specifically mediates deubiquitination of histone H2A monoubiquitinated at 'Lys-119' (H2AK118ub1). Mediates bisymmetric organization of the PR-DUB complex and is involved in association with nucleosomes to mediate deubiquitination. Does not deubiquitinate monoubiquitinated histone H2B. Required to maintain the transcriptionally repressive state of homeotic genes throughout development. The PR-DUB complex has weak or no activity toward 'Lys-48'- and 'Lys-63'-linked polyubiquitin chains. Polycomb group (PcG) protein. The sequence is that of Ubiquitin carboxyl-terminal hydrolase calypso from Drosophila persimilis (Fruit fly).